Reading from the N-terminus, the 138-residue chain is Acidic phospholipase A2 2 (138 aa).

The first 16 residues, 1–16 (MRTLWIVAVWLTGVEG), serve as a signal peptide directing secretion. Intrachain disulfides connect C42/C131, C44/C60, C59/C111, C65/C138, C66/C104, C73/C97, and C91/C102. Ca(2+)-binding residues include Y43, G45, and G47. H63 is a catalytic residue. D64 contributes to the Ca(2+) binding site. D105 is a catalytic residue.

As to quaternary structure, monomer. Ca(2+) is required as a cofactor. As to expression, expressed by the venom gland.

It localises to the secreted. The catalysed reaction is a 1,2-diacyl-sn-glycero-3-phosphocholine + H2O = a 1-acyl-sn-glycero-3-phosphocholine + a fatty acid + H(+). In terms of biological role, snake venom phospholipase that inhibits ADP- and collagen-induced human platelet aggregation. This inhibition is completely inhibited by abolition of catalytic activity in case of collagen as inducer and partially inhibited in case of ADP as inducer. PLA2 catalyzes the calcium-dependent hydrolysis of the 2-acyl groups in 3-sn-phosphoglycerides. The protein is Acidic phospholipase A2 2 of Macrovipera lebetinus (Levantine viper).